The primary structure comprises 214 residues: Adenylate kinase (214 aa).

An ATP-binding site is contributed by Gly10–Thr15. An NMP region spans residues Ser30 to Val59. AMP contacts are provided by residues Thr31, Arg36, Lys57–Val59, Gly85–Arg88, and Gln92. The tract at residues Gly122 to Asp159 is LID. ATP contacts are provided by residues Arg123 and Val132–Tyr133. Residues Arg156 and Arg167 each contribute to the AMP site. Lys192 bears the N6-acetyllysine mark. ATP is bound at residue Lys200.

The protein belongs to the adenylate kinase family. As to quaternary structure, monomer.

It is found in the cytoplasm. The catalysed reaction is AMP + ATP = 2 ADP. It functions in the pathway purine metabolism; AMP biosynthesis via salvage pathway; AMP from ADP: step 1/1. In terms of biological role, catalyzes the reversible transfer of the terminal phosphate group between ATP and AMP. Plays an important role in cellular energy homeostasis and in adenine nucleotide metabolism. The sequence is that of Adenylate kinase from Escherichia coli O45:K1 (strain S88 / ExPEC).